The following is a 134-amino-acid chain: Probable glycine cleavage system H protein (134 aa).

The 82-residue stretch at 29–110 (TVLVGISDYA…PYENWIAKLK (82 aa)) folds into the Lipoyl-binding domain. Lys70 is subject to N6-lipoyllysine.

It belongs to the GcvH family. The glycine cleavage system is composed of four proteins: P, T, L and H. It depends on (R)-lipoate as a cofactor.

Functionally, the glycine cleavage system catalyzes the degradation of glycine. The H protein shuttles the methylamine group of glycine from the P protein to the T protein. The polypeptide is Probable glycine cleavage system H protein (Thermococcus kodakarensis (strain ATCC BAA-918 / JCM 12380 / KOD1) (Pyrococcus kodakaraensis (strain KOD1))).